A 345-amino-acid chain; its full sequence is S-adenosylmethionine:tRNA ribosyltransferase-isomerase (345 aa).

This sequence belongs to the QueA family. Monomer.

Its subcellular location is the cytoplasm. The catalysed reaction is 7-aminomethyl-7-carbaguanosine(34) in tRNA + S-adenosyl-L-methionine = epoxyqueuosine(34) in tRNA + adenine + L-methionine + 2 H(+). The protein operates within tRNA modification; tRNA-queuosine biosynthesis. Functionally, transfers and isomerizes the ribose moiety from AdoMet to the 7-aminomethyl group of 7-deazaguanine (preQ1-tRNA) to give epoxyqueuosine (oQ-tRNA). This chain is S-adenosylmethionine:tRNA ribosyltransferase-isomerase, found in Helicobacter pylori (strain P12).